A 203-amino-acid chain; its full sequence is UDP-N-acetylglucosamine transferase subunit ALG13 (203 aa).

It belongs to the glycosyltransferase 28 family. Heterodimer with ALG14 to form a functional enzyme.

The protein resides in the endoplasmic reticulum. It carries out the reaction an N-acetyl-alpha-D-glucosaminyl-diphospho-di-trans,poly-cis-dolichol + UDP-N-acetyl-alpha-D-glucosamine = an N,N'-diacetylchitobiosyl-diphospho-di-trans,poly-cis-dolichol + UDP + H(+). Involved in protein N-glycosylation. Essential for the second step of the dolichol-linked oligosaccharide pathway. In Eremothecium gossypii (strain ATCC 10895 / CBS 109.51 / FGSC 9923 / NRRL Y-1056) (Yeast), this protein is UDP-N-acetylglucosamine transferase subunit ALG13 (ALG13).